Here is a 259-residue protein sequence, read N- to C-terminus: Indole-3-glycerol phosphate synthase (259 aa).

It belongs to the TrpC family.

It carries out the reaction 1-(2-carboxyphenylamino)-1-deoxy-D-ribulose 5-phosphate + H(+) = (1S,2R)-1-C-(indol-3-yl)glycerol 3-phosphate + CO2 + H2O. Its pathway is amino-acid biosynthesis; L-tryptophan biosynthesis; L-tryptophan from chorismate: step 4/5. In Dehalococcoides mccartyi (strain CBDB1), this protein is Indole-3-glycerol phosphate synthase.